Here is a 242-residue protein sequence, read N- to C-terminus: MASNGENGRHQEVGHKSLLQSDALYQYILETSVYPREPEAMKELREITAKHPWNLMTTSADEGQFLNMLLKLINAKNTMEIGVFTGYSLLATAMALPDDGKILAMDINRENYEIGLPVIEKAGLAHKIDFREGPALPVLDQMIEDGKYHGSYDFIFVDADKDNYLNYHKRLIDLVKVGGLIGYDNTLWNGSVVAPPDAPLRKYVRYYRDFVLELNKALAADPRIEICQLPVGDGITLCRRIS.

Lys-16 contributes to the substrate binding site. S-adenosyl-L-methionine-binding positions include Thr-58, Glu-80, 82-83, Ser-88, Asp-106, and Ala-135; that span reads GV. Asp-158 is a substrate binding site. Residue Asp-158 participates in a divalent metal cation binding. Asp-160 is a binding site for S-adenosyl-L-methionine. A divalent metal cation contacts are provided by Asp-184 and Asn-185. Asn-189 provides a ligand contact to substrate.

This sequence belongs to the class I-like SAM-binding methyltransferase superfamily. Cation-dependent O-methyltransferase family. CCoAMT subfamily. It depends on a divalent metal cation as a cofactor.

The enzyme catalyses (E)-caffeoyl-CoA + S-adenosyl-L-methionine = (E)-feruloyl-CoA + S-adenosyl-L-homocysteine + H(+). The protein operates within aromatic compound metabolism; phenylpropanoid biosynthesis. Functionally, methylates caffeoyl-CoA to feruloyl-CoA and 5-hydroxyferuloyl-CoA to sinapoyl-CoA. Plays a role in the synthesis of feruloylated polysaccharides. Involved in the reinforcement of the plant cell wall. Also involved in the responding to wounding or pathogen challenge by the increased formation of cell wall-bound ferulic acid polymers. The protein is Caffeoyl-CoA O-methyltransferase (CCOAOMT) of Solanum tuberosum (Potato).